We begin with the raw amino-acid sequence, 87 residues long: Sec-independent protein translocase protein TatA (87 aa).

Residues 1 to 21 (MGSFSITHWLILLVVVVVVFG) form a helical membrane-spanning segment. A disordered region spans residues 56–87 (VLDHDAGTNPPNITGTQSDTTSANKVDDTHNV). Residues 64 to 79 (NPPNITGTQSDTTSAN) are compositionally biased toward polar residues.

This sequence belongs to the TatA/E family. As to quaternary structure, the Tat system comprises two distinct complexes: a TatABC complex, containing multiple copies of TatA, TatB and TatC subunits, and a separate TatA complex, containing only TatA subunits. Substrates initially bind to the TatABC complex, which probably triggers association of the separate TatA complex to form the active translocon.

It localises to the cell inner membrane. Part of the twin-arginine translocation (Tat) system that transports large folded proteins containing a characteristic twin-arginine motif in their signal peptide across membranes. TatA could form the protein-conducting channel of the Tat system. The sequence is that of Sec-independent protein translocase protein TatA from Psychrobacter arcticus (strain DSM 17307 / VKM B-2377 / 273-4).